The sequence spans 326 residues: S-methyl-5'-thioadenosine phosphorylase (326 aa).

Residues S44, 86–87 (RH), and 119–120 (SA) contribute to the phosphate site. Residue M220 participates in substrate binding. T221 provides a ligand contact to phosphate. Residue 244–246 (DYD) participates in substrate binding.

This sequence belongs to the PNP/MTAP phosphorylase family. MTAP subfamily. As to quaternary structure, homohexamer. Dimer of a homotrimer.

The enzyme catalyses S-methyl-5'-thioadenosine + phosphate = 5-(methylsulfanyl)-alpha-D-ribose 1-phosphate + adenine. The protein operates within amino-acid biosynthesis; L-methionine biosynthesis via salvage pathway; S-methyl-5-thio-alpha-D-ribose 1-phosphate from S-methyl-5'-thioadenosine (phosphorylase route): step 1/1. Functionally, catalyzes the reversible phosphorylation of S-methyl-5'-thioadenosine (MTA) to adenine and 5-methylthioribose-1-phosphate. Involved in the breakdown of MTA, a major by-product of polyamine biosynthesis. Responsible for the first step in the methionine salvage pathway after MTA has been generated from S-adenosylmethionine. Has broad substrate specificity with 6-aminopurine nucleosides as preferred substrates. The polypeptide is S-methyl-5'-thioadenosine phosphorylase (Synechocystis sp. (strain PCC 6803 / GT-S)).